Reading from the N-terminus, the 394-residue chain is Elongation factor Tu 2 (394 aa).

In terms of domain architecture, tr-type G spans 10–204 (KPHVNVGTIG…ALDSYIPEPE (195 aa)). The G1 stretch occupies residues 19–26 (GHVDHGKT). 19–26 (GHVDHGKT) provides a ligand contact to GTP. Thr26 serves as a coordination point for Mg(2+). The G2 stretch occupies residues 60-64 (GITIS). The segment at 81–84 (DCPG) is G3. GTP contacts are provided by residues 81–85 (DCPGH) and 136–139 (NKCD). The G4 stretch occupies residues 136 to 139 (NKCD). A G5 region spans residues 174 to 176 (SAL).

This sequence belongs to the TRAFAC class translation factor GTPase superfamily. Classic translation factor GTPase family. EF-Tu/EF-1A subfamily. Monomer.

It is found in the cytoplasm. The enzyme catalyses GTP + H2O = GDP + phosphate + H(+). GTP hydrolase that promotes the GTP-dependent binding of aminoacyl-tRNA to the A-site of ribosomes during protein biosynthesis. This Pseudoalteromonas translucida (strain TAC 125) protein is Elongation factor Tu 2.